The sequence spans 585 residues: MAARGVGLLTRLPVCSQRRNRIPRSISRLLSCPGTIAASIGSEEQSSVVAETGIEDKTLQKKFSEVQKERREQAQRTVLIHCPNNINEKKFLKYLSQHGPVNNHFFYESFGLFAVVEFCQKDSIKSLQNGTHTPTQSTEAAIPFKSRFLNLRLKNPSSQVSGQPFVQTTNQSPPSSKKLFELLSYAESIEEQLNTLLKAFQLTEENIRLRHLTCSLIEDIAAAYFPSCVIRPFGSSVNTFGKLGCDLDMFLDLDETGKLDVHKNTGNFFMEFQVKNVPSERIATQKILSVIGECLDNFGPGCVGVQKILNARCPLVRFSHQGSGFQCDLTANNSIALKSSELLYIYGSLDSRVRALVFSVRCWARAHSLTSSIPGAWITNFSLTVMVIFFLQRRSPPILPTLDSLKSIADAEDRCILEGNNCTFVQDVNKIQPSGNTETLELLIKEFFEYFGNFAFNKNSINIRQGREQNKPDSSPLYIQNPFETSLNISKNVSQSQLQKFVELARDSAWILEQEDKNQPFSSSRQPWGLAALLLPPGSGHTSLSRKKKKKPMSEKVKGLLASIKSNSPDSSTDTSGKRTISTQA.

A mitochondrion-targeting transit peptide spans M1–A37. K90 bears the N6-acetyllysine mark. ATP-binding positions include Y107–S109 and G244–C245. Residues D246 and D248 each coordinate Mg(2+). The 46-residue stretch at E441–S486 folds into the PAP-associated domain. Residues P537–A585 are disordered. Residues I564–A585 are compositionally biased toward polar residues.

Belongs to the DNA polymerase type-B-like family. In terms of assembly, homodimer. The cofactor is Mg(2+). Requires Mn(2+) as cofactor.

It is found in the cytoplasm. It localises to the mitochondrion. It carries out the reaction RNA(n) + ATP = RNA(n)-3'-adenine ribonucleotide + diphosphate. Functionally, polymerase that creates the 3' poly(A) tail of mitochondrial transcripts. Can use all four nucleotides, but has higher activity with ATP and UTP (in vitro). Plays a role in replication-dependent histone mRNA degradation. May be involved in the terminal uridylation of mature histone mRNAs before their degradation is initiated. Might be responsible for the creation of some UAA stop codons which are not encoded in mtDNA. This chain is Poly(A) RNA polymerase, mitochondrial (Mtpap), found in Mus musculus (Mouse).